A 366-amino-acid chain; its full sequence is 3-dehydroquinate synthase (366 aa).

NAD(+) contacts are provided by residues 73-78 (DGERAK), 107-111 (GVVGD), 131-132 (TT), K144, and K153. Zn(2+) contacts are provided by E186, H249, and H266.

Belongs to the sugar phosphate cyclases superfamily. Dehydroquinate synthase family. Requires Co(2+) as cofactor. The cofactor is Zn(2+). NAD(+) serves as cofactor.

It is found in the cytoplasm. The enzyme catalyses 7-phospho-2-dehydro-3-deoxy-D-arabino-heptonate = 3-dehydroquinate + phosphate. Its pathway is metabolic intermediate biosynthesis; chorismate biosynthesis; chorismate from D-erythrose 4-phosphate and phosphoenolpyruvate: step 2/7. Catalyzes the conversion of 3-deoxy-D-arabino-heptulosonate 7-phosphate (DAHP) to dehydroquinate (DHQ). The chain is 3-dehydroquinate synthase from Koribacter versatilis (strain Ellin345).